The following is a 645-amino-acid chain: Glucans biosynthesis glucosyltransferase H (645 aa).

The interval 1 to 28 (MDGTVTLSPAPTDLPPVSSLDAGQPTLP) is disordered. 7 consecutive transmembrane segments (helical) span residues 64 to 84 (LIGGTLTATAVAVWVMLSVLW), 98 to 118 (LFVLLFAWIAMSFASAVAGFI), 423 to 443 (APMWGMLMLVGIGIPLAGAGI), 465 to 485 (AIWIFVCTMFVLLAPKLLGYI), 504 to 524 (ALSILLETVLAALMAPVVMYL), 558 to 578 (SYGGLSVFGLFMGTLAYLVSP), and 580 to 600 (LAAWMAPVIVGMVVSIPVVAV).

Belongs to the glycosyltransferase 2 family. OpgH subfamily.

Its subcellular location is the cell inner membrane. It functions in the pathway glycan metabolism; osmoregulated periplasmic glucan (OPG) biosynthesis. Involved in the biosynthesis of osmoregulated periplasmic glucans (OPGs). The chain is Glucans biosynthesis glucosyltransferase H from Xanthomonas campestris pv. campestris (strain 8004).